Reading from the N-terminus, the 246-residue chain is Uridylate kinase (246 aa).

11-14 (KLSG) lines the ATP pocket. Residue glycine 53 coordinates UMP. 2 residues coordinate ATP: glycine 54 and arginine 58. Residues aspartate 73 and 134-141 (TGNPYFTT) contribute to the UMP site. Threonine 161, tyrosine 167, and aspartate 170 together coordinate ATP.

This sequence belongs to the UMP kinase family. As to quaternary structure, homohexamer.

Its subcellular location is the cytoplasm. The catalysed reaction is UMP + ATP = UDP + ADP. It functions in the pathway pyrimidine metabolism; CTP biosynthesis via de novo pathway; UDP from UMP (UMPK route): step 1/1. Inhibited by UTP. Its function is as follows. Catalyzes the reversible phosphorylation of UMP to UDP. The chain is Uridylate kinase from Leptospira borgpetersenii serovar Hardjo-bovis (strain JB197).